Consider the following 938-residue polypeptide: RIPOR family member 3 (938 aa).

A phosphoserine mark is found at serine 9, serine 24, and serine 340. Threonine 345 carries the phosphothreonine modification. Residues serine 351 and serine 384 each carry the phosphoserine modification. 2 disordered regions span residues 402 to 430 (EMDS…FLPV) and 579 to 603 (FGGS…SPSE).

This sequence belongs to the RIPOR family.

The polypeptide is RIPOR family member 3 (Mus musculus (Mouse)).